The sequence spans 143 residues: Putative pre-16S rRNA nuclease (143 aa).

It belongs to the YqgF nuclease family.

It localises to the cytoplasm. Functionally, could be a nuclease involved in processing of the 5'-end of pre-16S rRNA. This is Putative pre-16S rRNA nuclease from Leuconostoc citreum (strain KM20).